Reading from the N-terminus, the 271-residue chain is MVVAKKSLGQHFLTDESFLDRIVNALPPLNPLKLVEIGVGLGDLTLKLLDRYPLKTYEIDSHLCEKMRSKLKAQKKPFKLELVEKDALFLKEEEPYFLISNLPYYIATRLVLNAFKDPKCRGLLVMTQKEVALKFCAKDSQNALSVLAHTIGNATLLFDVPPSAFSPPPKVFSSVFEVIKEPLKEKALASLAQAPFFEEALQKGFEMLEDFLKACFSSPRKTLSNNLKKSVSYREKLDKVLDFLALENQPTSVRASEIKDYLKLLNYLLKG.

Positions 11, 13, 38, 58, 86, and 101 each coordinate S-adenosyl-L-methionine.

Belongs to the class I-like SAM-binding methyltransferase superfamily. rRNA adenine N(6)-methyltransferase family. RsmA subfamily.

It localises to the cytoplasm. The enzyme catalyses adenosine(1518)/adenosine(1519) in 16S rRNA + 4 S-adenosyl-L-methionine = N(6)-dimethyladenosine(1518)/N(6)-dimethyladenosine(1519) in 16S rRNA + 4 S-adenosyl-L-homocysteine + 4 H(+). Functionally, specifically dimethylates two adjacent adenosines (A1518 and A1519) in the loop of a conserved hairpin near the 3'-end of 16S rRNA in the 30S particle. May play a critical role in biogenesis of 30S subunits. This chain is Ribosomal RNA small subunit methyltransferase A, found in Helicobacter pylori (strain ATCC 700392 / 26695) (Campylobacter pylori).